Here is a 332-residue protein sequence, read N- to C-terminus: 2,3-diketo-L-gulonate reductase (332 aa).

His44 serves as the catalytic Proton donor. NAD(+) is bound by residues 168-174 (ITMVDMS), 224-225 (WK), and 304-306 (GHE).

Belongs to the LDH2/MDH2 oxidoreductase family. DlgD subfamily. In terms of assembly, homodimer.

It localises to the cytoplasm. It carries out the reaction 3-dehydro-L-gulonate + NAD(+) = 2,3-dioxo-L-gulonate + NADH + H(+). It catalyses the reaction 3-dehydro-L-gulonate + NADP(+) = 2,3-dioxo-L-gulonate + NADPH + H(+). Functionally, catalyzes the reduction of 2,3-diketo-L-gulonate in the presence of NADH, to form 3-keto-L-gulonate. This chain is 2,3-diketo-L-gulonate reductase, found in Escherichia coli (strain K12 / MC4100 / BW2952).